The following is a 162-amino-acid chain: Toluate 1,2-dioxygenase subunit beta (162 aa).

Belongs to the bacterial ring-hydroxylating dioxygenase beta subunit family. In terms of assembly, this dioxygenase system consists of three proteins: the two subunits of the hydroxylase component (XylX and XylY), and an electron transfer component (XylZ).

It functions in the pathway xenobiotic degradation; toluene degradation. In Pseudomonas putida (Arthrobacter siderocapsulatus), this protein is Toluate 1,2-dioxygenase subunit beta (xylY).